The sequence spans 85 residues: Large ribosomal subunit protein bL27 (85 aa).

Residues 1-21 (MAHKKGVGSSRNGRDSDGQRL) form a disordered region.

It belongs to the bacterial ribosomal protein bL27 family.

In Citrifermentans bemidjiense (strain ATCC BAA-1014 / DSM 16622 / JCM 12645 / Bem) (Geobacter bemidjiensis), this protein is Large ribosomal subunit protein bL27.